The sequence spans 302 residues: Methionyl-tRNA formyltransferase (302 aa).

108 to 111 serves as a coordination point for (6S)-5,6,7,8-tetrahydrofolate; the sequence is SLLP.

This sequence belongs to the Fmt family.

The enzyme catalyses L-methionyl-tRNA(fMet) + (6R)-10-formyltetrahydrofolate = N-formyl-L-methionyl-tRNA(fMet) + (6S)-5,6,7,8-tetrahydrofolate + H(+). Its function is as follows. Attaches a formyl group to the free amino group of methionyl-tRNA(fMet). The formyl group appears to play a dual role in the initiator identity of N-formylmethionyl-tRNA by promoting its recognition by IF2 and preventing the misappropriation of this tRNA by the elongation apparatus. This Cereibacter sphaeroides (strain ATCC 17025 / ATH 2.4.3) (Rhodobacter sphaeroides) protein is Methionyl-tRNA formyltransferase.